We begin with the raw amino-acid sequence, 606 residues long: WD repeat-containing protein 1 (606 aa).

WD repeat units lie at residues 4 to 45, 48 to 87, 93 to 135, 138 to 176, 180 to 218, 224 to 263, 270 to 306, 311 to 351, 358 to 408, 432 to 474, 480 to 518, 523 to 561, and 566 to 604; these read EIKK…LRNI, PAVADIYTEHAHQVVVAKYAPSGFYIASGDISGKLRIWDT, ILKY…LWDT, SVGEITGHNKVINSVDIKQNRPYRLATGSDDNCAAFFEG, KFKFTIGDHSRFVNCVRFSPDGNRFATASADGQIFIYDG, VCALGGSKAHDGGIYAISWSPDSTHLLSASGDKTSKIWDV, STFPMGSNVLDQQLGCLWQKDHLLSISLSGYINYLDK, KPLR…YWDS, SFSG…KLDV, LKDQ…VYSI, KDEGKLLEAKGPVTDLAYSHDGAFLAVCDASKVVTVFSV, SENNVFYGHHAKIVCLAWSPDNEHFASGGMDMMVYVWTL, and TKVKIQDAHRLHHVSSLAWLDEHTLVTTSHDASVKEWTI. N6-acetyllysine occurs at positions 28, 81, 95, and 115. At Y238 the chain carries Phosphotyrosine. An N6-acetyllysine modification is found at K480.

This sequence belongs to the WD repeat AIP1 family.

Its subcellular location is the cytoplasm. The protein resides in the cytoskeleton. It is found in the cell projection. The protein localises to the podosome. Its function is as follows. Induces disassembly of actin filaments in conjunction with ADF/cofilin family proteins. Enhances cofilin-mediated actin severing. Involved in cytokinesis. Involved in chemotactic cell migration by restricting lamellipodial membrane protrusions. Involved in myocardium sarcomere organization. Required for cardiomyocyte growth and maintenance. Involved in megakaryocyte maturation and platelet shedding. Required for the establishment of planar cell polarity (PCP) during follicular epithelium development and for cell shape changes during PCP; the function seems to implicate cooperation with CFL1 and/or DSTN/ADF. Involved in the generation/maintenance of cortical tension. Involved in assembly and maintenance of epithelial apical cell junctions and plays a role in the organization of the perijunctional actomyosin belt. The sequence is that of WD repeat-containing protein 1 (Wdr1) from Rattus norvegicus (Rat).